A 1343-amino-acid chain; its full sequence is Spermatogenesis-associated protein 31A6 (1343 aa).

Residues 23-43 (PWVLDIFLTLVFALGFFFLLL) traverse the membrane as a helical segment. Disordered regions lie at residues 55–88 (PSPS…RECP), 106–235 (GPHL…STLI), 624–654 (DESP…EAQK), 895–951 (PRGI…REAV), 1080–1156 (VQEE…PPSV), and 1309–1331 (KAVS…SHHH). The segment covering 60-82 (GKRKCPVGRRRRPRGRMKNHSLR) has biased composition (basic residues). A compositionally biased stretch (polar residues) spans 165 to 178 (LASTPSPGPMTTSV). Positions 198-222 (PEPPALFPHPPHTPDPLACSPPPPK) are enriched in pro residues. Polar residues-rich tracts occupy residues 627–647 (PGTS…STGE) and 923–944 (LTYS…SSKA). Composition is skewed to basic and acidic residues over residues 1104 to 1123 (HKSE…RLEG) and 1133 to 1142 (RKTEDTHQDE).

Belongs to the SPATA31 family.

It is found in the membrane. Functionally, may play a role in spermatogenesis. The polypeptide is Spermatogenesis-associated protein 31A6 (SPATA31A6) (Homo sapiens (Human)).